The sequence spans 55 residues: Preprotein translocase subunit SecG (55 aa).

Residues 1-29 lie on the Cytoplasmic side of the membrane; sequence MAKKSGSGLQSSAGLMRYYEADKNAVQVQ. A helical membrane pass occupies residues 30-51; it reads PKVVLIVGAIVGIAVLFLSAVN. At 52 to 55 the chain is on the extracellular side; that stretch reads GFWP.

The protein belongs to the SEC61-beta family. In terms of assembly, component of the protein translocase complex. Heterotrimer consisting of alpha (SecY), beta (SecG) and gamma (SecE) subunits. Can form oligomers of the heterotrimer.

It is found in the cell membrane. In terms of biological role, involved in protein export. The function of the beta subunit is unknown, but it may be involved in stabilization of the trimeric complex. The polypeptide is Preprotein translocase subunit SecG (Methanosarcina barkeri (strain Fusaro / DSM 804)).